We begin with the raw amino-acid sequence, 93 residues long: Antitoxin RelF (93 aa).

Belongs to the phD/YefM antitoxin family. In terms of assembly, interacts with toxin RelG, which neutralizes the toxin. Also interacts with toxins RelE and RelK in vitro, in M.smegmatis coexpression with non-cognate toxins increases the toxicity of RelE but not of RelK.

Functionally, antitoxin component of a type II toxin-antitoxin (TA) system. Upon expression in M.smegmatis neutralizes the effect of toxin RelE2. In terms of biological role, induces its own promoter, in combination with RelG represses its own promoter. Has been seen to bind DNA in complex with toxin RelG but not alone. This Mycobacterium tuberculosis (strain ATCC 25618 / H37Rv) protein is Antitoxin RelF (relF).